The primary structure comprises 849 residues: Autoinducer 1 sensor kinase/phosphatase LuxN (849 aa).

7 helical membrane-spanning segments follow: residues 9–29, 41–61, 160–180, 196–216, 220–242, 251–275, and 283–301; these read IVYAKAITLLATVAVVMMWLF, VIFGTHHAAYIAYSVCIIAWI, SYFFIGLVSFVVLTLVNLVAM, IAGILVFMLSTAVIHLGMTYF, FSLTWLPPALSISEMLFVGYALL, YIAYLALSVLLVCAIFVLPLGAIFI, and WLIAIPICALIGITWQLLY. Residues 468–683 form the Histidine kinase domain; the sequence is SIAHEMRNPL…EFHLYFPVVP (216 aa). H471 carries the phosphohistidine; by autocatalysis modification. The region spanning 722 to 835 is the Response regulatory domain; the sequence is TVLIVDDKEV…ALRHVLGNWL (114 aa). A 4-aspartylphosphate modification is found at D771.

The protein localises to the cell inner membrane. It carries out the reaction ATP + protein L-histidine = ADP + protein N-phospho-L-histidine.. The phosphatase activity is constitutive and the kinase activity is regulated by the presence or absence of AI-1. At low cell density the kinase activity overrides the phosphatase activity. Its function is as follows. At low cell density, in the absence of AI-1 (autoinducer 1), LuxN has a kinase activity and autophosphorylates on His-471. The phosphoryl group is then transferred on Asp-771 of the response regulator domain. The phosphoryl group is transferred to LuxU, and ultimately to LuxO. At high cell density, in the presence of AI-1, the kinase activity is inactivated, and the response regulator domain has a phosphatase activity. LuxN phosphatase acts on itself. As LuxU could function to establish an equilibrium between the aspartyl-phosphate of LuxN and the aspartyl-phosphate of LuxO, LuxU transfers phosphate from LuxO to LuxN and finally phosphate is drained from the system. The polypeptide is Autoinducer 1 sensor kinase/phosphatase LuxN (luxN) (Vibrio campbellii (strain ATCC BAA-1116)).